The following is a 250-amino-acid chain: Probable transcriptional regulatory protein ckrop_1032 (250 aa).

The interval 1 to 22 is disordered; the sequence is MSGHSKWATTKHKKAANDAKRG.

Belongs to the TACO1 family.

It is found in the cytoplasm. The protein is Probable transcriptional regulatory protein ckrop_1032 of Corynebacterium kroppenstedtii (strain DSM 44385 / JCM 11950 / CIP 105744 / CCUG 35717).